A 310-amino-acid polypeptide reads, in one-letter code: Putative S-adenosyl-L-methionine-dependent methyltransferase MAB_4587c (310 aa).

S-adenosyl-L-methionine contacts are provided by residues aspartate 126 and 155-156 (DL).

The protein belongs to the UPF0677 family.

Exhibits S-adenosyl-L-methionine-dependent methyltransferase activity. The chain is Putative S-adenosyl-L-methionine-dependent methyltransferase MAB_4587c from Mycobacteroides abscessus (strain ATCC 19977 / DSM 44196 / CCUG 20993 / CIP 104536 / JCM 13569 / NCTC 13031 / TMC 1543 / L948) (Mycobacterium abscessus).